Here is a 435-residue protein sequence, read N- to C-terminus: MTQLEAARKGKITEEMAYVAEKEGVSPEFVREGVAAGRIVIPRNPNHKTLTDFKGIGEGLSVKVNANLGTSYDYVDVEEEVEKARVAIQYGADTVMDLSTGGDLKAIRKRILEVATVPLGTVPIYEAEFRAARRKNFFDMSADELFQVIEEHGKEGVDYITVHVGVTLKNLEVYRNSPRTTGIVSRGGGLMAAWMLHRGEENPLYARFDDLLDIARTYDMTLSLGDGLRPGSLADSTDRAQIAELLTIGELVERARRAGVQAMVEGPGHIPLNEVAANVQIQKKLTGHAPFYILGMLPVDTAAGFDHIAGAIGGALAGWWGADMLCYLTPAEHLGLPTPEHVKQGVIAFKIAAHAADVARGNKRALERNRRMSEARYRLDWEGQFALALFPEEARRLKEERGSKTKACSMCGPFCPMNLVEAVLKGKGRMELPVA.

Substrate contacts are provided by residues N67, M96, Y125, H163, 185 to 187 (SRG), 226 to 229 (DGLR), and E265. H269 is a binding site for Zn(2+). Y292 contacts substrate. Residue H333 coordinates Zn(2+). [4Fe-4S] cluster is bound by residues C408, C411, and C415.

This sequence belongs to the ThiC family. The cofactor is [4Fe-4S] cluster.

The enzyme catalyses 5-amino-1-(5-phospho-beta-D-ribosyl)imidazole + S-adenosyl-L-methionine = 4-amino-2-methyl-5-(phosphooxymethyl)pyrimidine + CO + 5'-deoxyadenosine + formate + L-methionine + 3 H(+). It functions in the pathway cofactor biosynthesis; thiamine diphosphate biosynthesis. Its function is as follows. Catalyzes the synthesis of the hydroxymethylpyrimidine phosphate (HMP-P) moiety of thiamine from aminoimidazole ribotide (AIR) in a radical S-adenosyl-L-methionine (SAM)-dependent reaction. This chain is Phosphomethylpyrimidine synthase, found in Thermus thermophilus (strain ATCC 27634 / DSM 579 / HB8).